Reading from the N-terminus, the 346-residue chain is Phosphoribosylformylglycinamidine cyclo-ligase (346 aa).

This sequence belongs to the AIR synthase family.

The protein resides in the cytoplasm. It catalyses the reaction 2-formamido-N(1)-(5-O-phospho-beta-D-ribosyl)acetamidine + ATP = 5-amino-1-(5-phospho-beta-D-ribosyl)imidazole + ADP + phosphate + H(+). The protein operates within purine metabolism; IMP biosynthesis via de novo pathway; 5-amino-1-(5-phospho-D-ribosyl)imidazole from N(2)-formyl-N(1)-(5-phospho-D-ribosyl)glycinamide: step 2/2. This is Phosphoribosylformylglycinamidine cyclo-ligase from Bacillus velezensis (strain DSM 23117 / BGSC 10A6 / LMG 26770 / FZB42) (Bacillus amyloliquefaciens subsp. plantarum).